The sequence spans 655 residues: DNA topoisomerase 4 subunit B (655 aa).

ATP contacts are provided by residues Tyr-9, Asn-49, Asp-76, 116-122 (GLHGVGA), and Lys-340. The segment covering 387-397 (AARKAREEARS) has biased composition (basic and acidic residues). Residues 387–419 (AARKAREEARSGKKRKKSEATLSGKLTPAGSRN) form a disordered region. The Toprim domain maps to 423–537 (NELYLVEGDS…HGKVFIALPP (115 aa)). Residues Glu-429, Asp-502, and Asp-504 each coordinate Mg(2+).

This sequence belongs to the type II topoisomerase family. ParE type 2 subfamily. As to quaternary structure, heterotetramer composed of ParC and ParE. It depends on Mg(2+) as a cofactor. The cofactor is Mn(2+). Ca(2+) is required as a cofactor.

The enzyme catalyses ATP-dependent breakage, passage and rejoining of double-stranded DNA.. Topoisomerase IV is essential for chromosome segregation. It relaxes supercoiled DNA. Performs the decatenation events required during the replication of a circular DNA molecule. This chain is DNA topoisomerase 4 subunit B, found in Bacillus subtilis (strain 168).